Consider the following 450-residue polypeptide: Tubulin beta-3 chain (450 aa).

The MREI motif signature appears at 1 to 4; the sequence is MREI. The GTP site is built by glutamine 11, glutamate 69, serine 138, glycine 142, threonine 143, and glycine 144. Glutamate 69 contributes to the Mg(2+) binding site. Serine 172 carries the post-translational modification Phosphoserine; by CDK1. GTP is bound by residues asparagine 204 and asparagine 226. A disordered region spans residues 422–450; it reads YQQYQDATAEEEGEMYEDDDEESEAQGPK. Over residues 429-450 the composition is skewed to acidic residues; the sequence is TAEEEGEMYEDDDEESEAQGPK. Glutamate 438 carries the post-translational modification 5-glutamyl polyglutamate. The residue at position 444 (serine 444) is a Phosphoserine.

Belongs to the tubulin family. Heterodimer of alpha- and beta-tubulin. A typical microtubule is a hollow water-filled tube with an outer diameter of 25 nm and an inner diameter of 15 nM. Alpha-beta heterodimers associate head-to-tail to form protofilaments running lengthwise along the microtubule wall with the beta-tubulin subunit facing the microtubule plus end conferring a structural polarity. Microtubules usually have 13 protofilaments but different protofilament numbers can be found in some organisms and specialized cells. Interacts with gamma-tubulin; the interaction allows microtubules to nucleate from the gamma-tubulin ring complex (gTuRC). Interacts with UNC5C (via cytoplasmic domain); this interaction is decreased by NTN1/Netrin-1. Interacts with NLRP5/MATER at cytoskeleton microtubules. Interacts with DPYSL5. Interacts with CFAP61. The cofactor is Mg(2+). In terms of processing, some glutamate residues at the C-terminus are polyglycylated, resulting in polyglycine chains on the gamma-carboxyl group. Glycylation is mainly limited to tubulin incorporated into axonemes (cilia and flagella) whereas glutamylation is prevalent in neuronal cells, centrioles, axonemes, and the mitotic spindle. Both modifications can coexist on the same protein on adjacent residues, and lowering polyglycylation levels increases polyglutamylation, and reciprocally. Cilia and flagella glycylation is required for their stability and maintenance. Flagella glycylation controls sperm motility. Some glutamate residues at the C-terminus are polyglutamylated, resulting in polyglutamate chains on the gamma-carboxyl group. Polyglutamylation plays a key role in microtubule severing by spastin (SPAST). SPAST preferentially recognizes and acts on microtubules decorated with short polyglutamate tails: severing activity by SPAST increases as the number of glutamates per tubulin rises from one to eight, but decreases beyond this glutamylation threshold. Glutamylation is also involved in cilia motility. Post-translationally, phosphorylated on Ser-172 by CDK1 during the cell cycle, from metaphase to telophase, but not in interphase. This phosphorylation inhibits tubulin incorporation into microtubules.

It is found in the cytoplasm. The protein resides in the cytoskeleton. It localises to the cell projection. Its subcellular location is the growth cone. The protein localises to the lamellipodium. It is found in the filopodium. Functionally, tubulin is the major constituent of microtubules, protein filaments consisting of alpha- and beta-tubulin heterodimers. Microtubules grow by the addition of GTP-tubulin dimers to the microtubule end, where a stabilizing cap forms. Below the cap, alpha-beta tubulin heterodimers are in GDP-bound state, owing to GTPase activity of alpha-tubulin. TUBB3 plays a critical role in proper axon guidance and maintenance. Binding of NTN1/Netrin-1 to its receptor UNC5C might cause dissociation of UNC5C from polymerized TUBB3 in microtubules and thereby lead to increased microtubule dynamics and axon repulsion. Plays a role in dorsal root ganglion axon projection towards the spinal cord. The sequence is that of Tubulin beta-3 chain (Tubb3) from Rattus norvegicus (Rat).